Consider the following 201-residue polypeptide: Recombination protein RecR (201 aa).

The C4-type zinc finger occupies 57-72 (CADCRTFTEQEHCTIC). The Toprim domain maps to 81 to 176 (GQICVVESPA…LASRIAHGVP (96 aa)).

The protein belongs to the RecR family.

Its function is as follows. May play a role in DNA repair. It seems to be involved in an RecBC-independent recombinational process of DNA repair. It may act with RecF and RecO. In Yersinia pestis bv. Antiqua (strain Antiqua), this protein is Recombination protein RecR.